A 579-amino-acid chain; its full sequence is Arginine--tRNA ligase (579 aa).

The 'HIGH' region signature appears at 127 to 137 (PNLAKEMHVGH).

The protein belongs to the class-I aminoacyl-tRNA synthetase family. As to quaternary structure, monomer.

It localises to the cytoplasm. The enzyme catalyses tRNA(Arg) + L-arginine + ATP = L-arginyl-tRNA(Arg) + AMP + diphosphate. The protein is Arginine--tRNA ligase of Ectopseudomonas mendocina (strain ymp) (Pseudomonas mendocina).